The chain runs to 407 residues: 4-hydroxybenzoate polyprenyltransferase, mitochondrial (407 aa).

A mitochondrion-targeting transit peptide spans 1–20 (MAFFGLSRVSRRLLKSSVSV). Helical transmembrane passes span 137 to 157 (IGTW…ADPG), 162 to 182 (FKYM…GCTI), 210 to 230 (FQGI…LLQL), 254 to 274 (FTFW…LLGW), 279 to 299 (GSIA…WTLV), and 330 to 350 (LWLT…GFSA).

This sequence belongs to the UbiA prenyltransferase family. The cofactor is Mg(2+). Expressed in flowers.

The protein localises to the mitochondrion inner membrane. The catalysed reaction is an all-trans-polyprenyl diphosphate + 4-hydroxybenzoate = a 4-hydroxy-3-(all-trans-polyprenyl)benzoate + diphosphate. It participates in cofactor biosynthesis; ubiquinone biosynthesis. In terms of biological role, catalyzes the prenylation of para-hydroxybenzoate (PHB) with an all-trans polyprenyl group. Mediates the second step in the final reaction sequence of coenzyme Q (CoQ) biosynthesis, which is the condensation of the polyisoprenoid side chain with PHB, generating the first membrane-bound Q intermediate. Required for embryo development. The chain is 4-hydroxybenzoate polyprenyltransferase, mitochondrial from Arabidopsis thaliana (Mouse-ear cress).